The primary structure comprises 250 residues: tRNA (guanine-N(1)-)-methyltransferase (250 aa).

Residues glycine 115 and 135–140 contribute to the S-adenosyl-L-methionine site; that span reads LGDFVL.

This sequence belongs to the RNA methyltransferase TrmD family. As to quaternary structure, homodimer.

The protein localises to the cytoplasm. It catalyses the reaction guanosine(37) in tRNA + S-adenosyl-L-methionine = N(1)-methylguanosine(37) in tRNA + S-adenosyl-L-homocysteine + H(+). Its function is as follows. Specifically methylates guanosine-37 in various tRNAs. In Legionella pneumophila (strain Lens), this protein is tRNA (guanine-N(1)-)-methyltransferase.